The chain runs to 837 residues: Cap-specific mRNA (nucleoside-2'-O-)-methyltransferase 1 (837 aa).

Residues 1–66 form a disordered region; it reads MKRRTDPECT…EGKQPCSDDF (66 aa). The short motif at 2-18 is the Bipartite nuclear localization signal element; the sequence is KRRTDPECTAPLKKQKR. Residues Ser27, Ser30, and Ser52 each carry the phosphoserine modification. Positions 56–66 are enriched in basic and acidic residues; the sequence is TEGKQPCSDDF. The G-patch domain occupies 86–132; it reads YNSVSQRLMAKMGFREGEGLGKYSQGRKDIVETSNQKGRRGLGLTLQ. Residue Ser90 is modified to Phosphoserine. Lys107 is modified (N6-acetyllysine). Residues 202–206 and Arg217 contribute to the substrate site; that span reads KSVFD. The region spanning 230–449 is the RrmJ-type SAM-dependent 2'-O-MTase domain; it reads FFLNRAAMKM…ERYVVCKGLK (220 aa). Asn233 provides a ligand contact to S-adenosyl-L-methionine. Lys238 is a catalytic residue. Residues 276 to 282 and 334 to 335 each bind S-adenosyl-L-methionine; these read CAGPGGF and DI. Residue Asp363 is part of the active site. Substrate is bound at residue 373–375; sequence NLQ. Residue Lys403 is the Proton acceptor of the active site. Asn438 is a substrate binding site. Residues 726-834 are interaction with POLR2A; the sequence is SGGTPKLSYT…VLSFIQSHNP (109 aa). The 35-residue stretch at 751–785 folds into the WW domain; sequence RTVNEPWTMGFSKSNNRKFFYNKKTQKSVYALPTE.

Interacts with POLR2A (via C-terminus).

The protein resides in the nucleus. It catalyses the reaction a 5'-end (N(7)-methyl 5'-triphosphoguanosine)-ribonucleoside in mRNA + S-adenosyl-L-methionine = a 5'-end (N(7)-methyl 5'-triphosphoguanosine)-(2'-O-methyl-ribonucleoside) in mRNA + S-adenosyl-L-homocysteine + H(+). In terms of biological role, S-adenosyl-L-methionine-dependent methyltransferase that mediates mRNA cap1 2'-O-ribose methylation to the 5'-cap structure of mRNAs. Methylates the ribose of the first nucleotide of a m(7)GpppG-capped mRNA and small nuclear RNA (snRNA) to produce m(7)GpppRm (cap1). Displays a preference for cap0 transcripts. Cap1 modification is linked to higher levels of translation. May be involved in the interferon response pathway. This chain is Cap-specific mRNA (nucleoside-2'-O-)-methyltransferase 1 (Cmtr1), found in Mus musculus (Mouse).